Consider the following 437-residue polypeptide: Doublesex- and mab-3-related transcription factor A2 (437 aa).

A DNA-binding region (DM) is located at residues 49-96; the sequence is CARCRNHGVVSALKGHKRYCRWKDCMCAKCTLIAERQRVMAAQVALRR. A disordered region spans residues 160–253; sequence IPRSMTPQLP…DPSSSSLARQ (94 aa). Low complexity-rich tracts occupy residues 179-201 and 223-235; these read SEPV…SGSE and SPSL…SESG. Residues 254-289 enclose the DMA domain; the sequence is RTPINILTRVFPAQKRSVLELVLQGCGGDVVQAIEQ.

It belongs to the DMRT family.

It is found in the nucleus. May be involved in sexual development. The polypeptide is Doublesex- and mab-3-related transcription factor A2 (dmrta2) (Xenopus laevis (African clawed frog)).